Consider the following 620-residue polypeptide: Glutathione-regulated potassium-efflux system protein KefC (620 aa).

12 helical membrane passes run 4 to 24, 26 to 46, 54 to 74, 90 to 110, 114 to 134, 149 to 169, 178 to 198, 218 to 238, 270 to 290, 294 to 314, 327 to 347, and 359 to 379; these read HTLI…PIAV, LGLG…PWGL, SILH…GLEL, GALQ…LLGL, VAEL…MQAM, FAVL…IPLL, MGAF…VVLL, VFSA…EEVG, GLLL…GTLL, LRIV…LWLI, WFAV…GAAQ, and SLTL…VILN. The 120-residue stretch at 399 to 518 folds into the RCK N-terminal domain; sequence QPRVIIAGFG…AGVEKPERET (120 aa). The tract at residues 597-620 is disordered; it reads GWQGTEEGKHTGNMADEPETKPSS.

Belongs to the monovalent cation:proton antiporter 2 (CPA2) transporter (TC 2.A.37) family. KefC subfamily. Homodimer. Interacts with the regulatory subunit KefF.

It localises to the cell inner membrane. Its function is as follows. Pore-forming subunit of a potassium efflux system that confers protection against electrophiles. Catalyzes K(+)/H(+) antiport. This is Glutathione-regulated potassium-efflux system protein KefC from Escherichia coli O8 (strain IAI1).